A 396-amino-acid chain; its full sequence is Tryptophan synthase beta chain (396 aa).

K88 carries the N6-(pyridoxal phosphate)lysine modification.

Belongs to the TrpB family. Tetramer of two alpha and two beta chains. It depends on pyridoxal 5'-phosphate as a cofactor.

It catalyses the reaction (1S,2R)-1-C-(indol-3-yl)glycerol 3-phosphate + L-serine = D-glyceraldehyde 3-phosphate + L-tryptophan + H2O. The protein operates within amino-acid biosynthesis; L-tryptophan biosynthesis; L-tryptophan from chorismate: step 5/5. Functionally, the beta subunit is responsible for the synthesis of L-tryptophan from indole and L-serine. The protein is Tryptophan synthase beta chain of Shewanella sp. (strain W3-18-1).